A 629-amino-acid chain; its full sequence is Phosphomethylpyrimidine synthase (629 aa).

Residues 1–30 (MTTKLKNASNLSESAQVDQQSVQPFTRSQK) form a disordered region. Substrate contacts are provided by residues asparagine 233, methionine 262, tyrosine 291, histidine 327, 347 to 349 (SRG), 388 to 391 (DGLR), and glutamate 427. Position 431 (histidine 431) interacts with Zn(2+). Tyrosine 454 contacts substrate. Position 495 (histidine 495) interacts with Zn(2+). The [4Fe-4S] cluster site is built by cysteine 575, cysteine 578, and cysteine 583.

The protein belongs to the ThiC family. In terms of assembly, homodimer. [4Fe-4S] cluster serves as cofactor.

The catalysed reaction is 5-amino-1-(5-phospho-beta-D-ribosyl)imidazole + S-adenosyl-L-methionine = 4-amino-2-methyl-5-(phosphooxymethyl)pyrimidine + CO + 5'-deoxyadenosine + formate + L-methionine + 3 H(+). It participates in cofactor biosynthesis; thiamine diphosphate biosynthesis. In terms of biological role, catalyzes the synthesis of the hydroxymethylpyrimidine phosphate (HMP-P) moiety of thiamine from aminoimidazole ribotide (AIR) in a radical S-adenosyl-L-methionine (SAM)-dependent reaction. The sequence is that of Phosphomethylpyrimidine synthase from Pseudomonas fluorescens (strain ATCC BAA-477 / NRRL B-23932 / Pf-5).